The chain runs to 292 residues: MPQHDQLHRYLFENFAVRGELVTVSETLQQILENHDYPQPVKNVLAELLVATSLLTATLKFDGDITVQLQGDGPMNLAVINGNNNQQMRGVARVQGEIPENADLKTLVGNGYVVITITPSEGERYQGVVGLEGDTLAACLEDYFMRSEQLPTRLFIRTGDVDGKPAAGGMLLQVMPAQNAQQDDFDHLATLTETIKTEELLTLPANEVLWRLYHEEEVTVYDPQDVEFKCTCSRERCADALKTLPDEEVDSILAEDGEIDMHCDYCGNHYLFNAMDIAEIRNNASPADPQVH.

2 disulfides stabilise this stretch: Cys-230–Cys-232 and Cys-263–Cys-266.

The protein belongs to the HSP33 family. Under oxidizing conditions two disulfide bonds are formed involving the reactive cysteines. Under reducing conditions zinc is bound to the reactive cysteines and the protein is inactive.

It is found in the cytoplasm. Its function is as follows. Redox regulated molecular chaperone. Protects both thermally unfolding and oxidatively damaged proteins from irreversible aggregation. Plays an important role in the bacterial defense system toward oxidative stress. This Shigella dysenteriae serotype 1 (strain Sd197) protein is 33 kDa chaperonin.